A 366-amino-acid chain; its full sequence is Probable protein arginine N-methyltransferase 1.2 (366 aa).

In terms of domain architecture, SAM-dependent MTase PRMT-type spans 45-347 (ADYYFDSYSH…NPRDVDIKLS (303 aa)). Residues Glu-157 and Glu-166 contribute to the active site.

Belongs to the class I-like SAM-binding methyltransferase superfamily. Protein arginine N-methyltransferase family. Interacts with FIB2 and PRMT11.

It is found in the nucleus. Its subcellular location is the cytoplasm. Functionally, methylates (mono and asymmetric dimethylation) the guanidino nitrogens of arginyl residues present in a glycine and arginine-rich domain. Type I arginine methyltransferase active on both histones and non-histone proteins. Mediates the methylation of MED36A. This Arabidopsis thaliana (Mouse-ear cress) protein is Probable protein arginine N-methyltransferase 1.2 (PRMT12).